A 293-amino-acid polypeptide reads, in one-letter code: Large ribosomal subunit protein uL4 (293 aa).

Basic and acidic residues-rich tracts occupy residues 1-14 (MAEE…EKTP) and 33-55 (KTTE…ESTK). Disordered regions lie at residues 1–72 (MAEE…IKSE) and 130–166 (QRQG…STRS).

This sequence belongs to the universal ribosomal protein uL4 family. As to quaternary structure, part of the 50S ribosomal subunit.

One of the primary rRNA binding proteins, this protein initially binds near the 5'-end of the 23S rRNA. It is important during the early stages of 50S assembly. It makes multiple contacts with different domains of the 23S rRNA in the assembled 50S subunit and ribosome. Functionally, forms part of the polypeptide exit tunnel. This Mycoplasma mobile (strain ATCC 43663 / 163K / NCTC 11711) (Mesomycoplasma mobile) protein is Large ribosomal subunit protein uL4.